A 621-amino-acid polypeptide reads, in one-letter code: Polycystin-2-like protein 2 (621 aa).

The Cytoplasmic portion of the chain corresponds to 1–31 (MSEATWWYRGGTSKHDLHYRREAEVNTTLEE). Residues 32-52 (LLLYFIFLINLCILTFGMVNP) traverse the membrane as a helical segment. Over 53–277 (HMYYLNKVMS…SVKLLRYVSY (225 aa)) the chain is Extracellular. Residues asparagine 115 and asparagine 138 are each glycosylated (N-linked (GlcNAc...) asparagine). Residues 278–298 (YDYFIASCEVIFCIFLFVFII) form a helical membrane-spanning segment. At 299-314 (QELRKVNEFKSAYFRS) the chain is on the cytoplasmic side. A helical membrane pass occupies residues 315-335 (VWNWLEMLLLLLCFLAVSFYA). The Extracellular segment spans residues 336–360 (YCNMQSFLLLGQLLKNTDSYPDFYF). A helical transmembrane segment spans residues 361–381 (LAYWHIYYNNVIAITIFFAWI). The Cytoplasmic segment spans residues 382-406 (KIFKFISFNETMSQLSSTLSRCMKD). Residues 407-427 (IVGFAIMFFIIFSAYAQLGFL) form a helical membrane-spanning segment. The Extracellular portion of the chain corresponds to 428–468 (VFGSQVDDFSTFQNSIFAQFRIVLGDFNFAGIQQANWILGP). The chain crosses the membrane as a helical span at residues 469 to 489 (IYFITFIFFVFFVLLNMFLAI). Residues 490 to 621 (INDTYSEVKA…KLNQLMRKLH (132 aa)) are Cytoplasmic-facing. Residues 521–551 (NVLEKLRLKKAQAKEEKKMQTTDLAQRARRD) are a coiled coil.

Belongs to the polycystin family. Interacts with TRPC1 and TRPC5. As to expression, expressed only in testis and heart.

The protein resides in the membrane. Functionally, exhibits a lower single conductance but no spontaneous channel activity. May function as a regulator of calcium channels or a channel component involving Ca2(+) homeostasis. This chain is Polycystin-2-like protein 2, found in Mus musculus (Mouse).